Consider the following 468-residue polypeptide: Cysteine--tRNA ligase (468 aa).

Cysteine 29 provides a ligand contact to Zn(2+). A 'HIGH' region motif is present at residues proline 31–asparagine 41. Positions 209, 234, and 238 each coordinate Zn(2+). A 'KMSKS' region motif is present at residues lysine 266–serine 270. Position 269 (lysine 269) interacts with ATP.

Belongs to the class-I aminoacyl-tRNA synthetase family. Monomer. The cofactor is Zn(2+).

It is found in the cytoplasm. It carries out the reaction tRNA(Cys) + L-cysteine + ATP = L-cysteinyl-tRNA(Cys) + AMP + diphosphate. This Brevibacillus brevis (strain 47 / JCM 6285 / NBRC 100599) protein is Cysteine--tRNA ligase.